Consider the following 703-residue polypeptide: MAELMLLSEIADPTRFFTDNLLSPEDWGLQNSTLYSGLDEVAEEQTQLFRCPEQDVPFDGSSLDVGMDVSPSEPPWELLPIFPDLQVKSEPSSPCSSSSLSSESSRLSTEPSSEALGVGEVLHVKTESLAPPLCLLGDDPTSSFETVQINVIPTSDDSSDVQTKIEPVSPCSSVNSEASLLSADSSSQAFIGEEVLEVKTESLSPSGCLLWDVPAPSLGAVQISMGPSLDGSSGKALPTRKPPLQPKPVVLTTVPMPSRAVPPSTTVLLQSLVQPPPVSPVVLIQGAIRVQPEGPAPSLPRPERKSIVPAPMPGNSCPPEVDAKLLKRQQRMIKNRESACQSRRKKKEYLQGLEARLQAVLADNQQLRRENAALRRRLEALLAENSELKLGSGNRKVVCIMVFLLFIAFNFGPVSISEPPSAPISPRMNKGEPQPRRHLLGFSEQEPVQGVEPLQGSSQGPKEPQPSPTDQPSFSNLTAFPGGAKELLLRDLDQLFLSSDCRHFNRTESLRLADELSGWVQRHQRGRRKIPQRAQERQKSQPRKKSPPVKAVPIQPPGPPERDSVGQLQLYRHPDRSQPAFLDAIDRREDTFYVVSFRRDHLLLPAISHNKTSRPKMSLVMPAMAPNETLSGRGAPGDYEEMMQIECEVMDTRVIHIKTSTVPPSLRKQPSPTPGNATGGPLPVSAASQAHQASHQPLYLNHP.

At alanine 2 the chain carries N-acetylalanine. Positions 2–86 (AELMLLSEIA…ELLPIFPDLQ (85 aa)) are transcription activation. At 2 to 396 (AELMLLSEIA…ELKLGSGNRK (395 aa)) the chain is on the cytoplasmic side. Disordered stretches follow at residues 87–114 (VKSE…PSSE), 229–248 (LDGS…QPKP), and 293–317 (EGPA…GNSC). Low complexity predominate over residues 89–114 (SEPSSPCSSSSLSSESSRLSTEPSSE). One can recognise a bZIP domain in the interval 325–388 (LLKRQQRMIK…EALLAENSEL (64 aa)). Positions 327-347 (KRQQRMIKNRESACQSRRKKK) are basic motif. Positions 350–357 (LQGLEARL) are leucine-zipper. The helical; Signal-anchor for type II membrane protein transmembrane segment at 397–417 (VVCIMVFLLFIAFNFGPVSIS) threads the bilayer. Over 418-703 (EPPSAPISPR…SHQPLYLNHP (286 aa)) the chain is Lumenal. Residues 447–479 (PVQGVEPLQGSSQGPKEPQPSPTDQPSFSNLTA) are disordered. N-linked (GlcNAc...) asparagine glycans are attached at residues asparagine 476 and asparagine 505. The interval 521–565 (QRHQRGRRKIPQRAQERQKSQPRKKSPPVKAVPIQPPGPPERDSV) is disordered. A compositionally biased stretch (basic residues) spans 522 to 531 (RHQRGRRKIP). N-linked (GlcNAc...) asparagine glycosylation is found at asparagine 610, asparagine 627, and asparagine 676. Over residues 660–676 (STVPPSLRKQPSPTPGN) the composition is skewed to polar residues. Residues 660 to 703 (STVPPSLRKQPSPTPGNATGGPLPVSAASQAHQASHQPLYLNHP) are disordered. Positions 685-696 (SAASQAHQASHQ) are enriched in low complexity.

The protein belongs to the bZIP family. ATF subfamily. As to quaternary structure, homodimer and heterodimer with ATF6-alpha. The dimer interacts with the nuclear transcription factor Y (NF-Y) trimer through direct binding to NF-Y subunit C (NF-YC). In terms of processing, N-glycosylated. During unfolded protein response, a fragment of approximately 60 kDa containing the cytoplasmic transcription factor domain is released by proteolysis. The cleavage is probably performed sequentially by site-1 (MBTPS1, S1P) and site-2 (MBTPS2, S2P) proteases. As to expression, ubiquitous.

Its subcellular location is the endoplasmic reticulum membrane. The protein resides in the nucleus. Precursor of the transcription factor form (Processed cyclic AMP-dependent transcription factor ATF-6 beta), which is embedded in the endoplasmic reticulum membrane. Endoplasmic reticulum stress promotes processing of this form, releasing the transcription factor form that translocates into the nucleus, where it activates transcription of genes involved in the unfolded protein response (UPR). Functionally, transcription factor that acts in the unfolded protein response (UPR) pathway by activating UPR target genes induced during ER stress. Binds DNA on the 5'-CCAC[GA]-3' half of the ER stress response element (ERSE) (5'-CCAATN(9)CCAC[GA]-3') when NF-Y is bound to ERSE. This is Cyclic AMP-dependent transcription factor ATF-6 beta (ATF6B) from Homo sapiens (Human).